Reading from the N-terminus, the 494-residue chain is BUB3-interacting and GLEBS motif-containing protein ZNF207 (494 aa).

Residues 1-92 (MGRKKKKQLK…EGIPEKDMDE (92 aa)) form a microtubule-binding region region. 2 consecutive C2H2-type zinc fingers follow at residues 11 to 34 (PWCWYCNRDFDDEKILTQHQKAKH) and 35 to 58 (FKCHICHKKLYTGPGLAIHCMQVH). Residues 100-111 (KTQESQKKKQQD) show a composition bias toward basic and acidic residues. Disordered regions lie at residues 100 to 161 (KTQE…PGIP), 250 to 377 (NRPP…SATS), and 455 to 494 (LPGAMPPYGQGPPMVPPYQGGPPRPPMGMRPPVMSQGGRY). Residues 112 to 121 (DSDEYDDDDS) are compositionally biased toward acidic residues. Over residues 127–136 (FQPQPVQPQQ) the composition is skewed to polar residues. Pro residues predominate over residues 142–161 (MAQPGLPPVPGAPGMPPGIP). The span at 283–300 (SSSTASSNSESLSASSKA) shows a compositional bias: low complexity. Residues 323–332 (LNSTPATSTE) are compositionally biased toward polar residues. Residues 342–377 (TQSTASTTSTTNSTAAKPAASITSKPATLTTTSATS) are compositionally biased toward low complexity. Positions 375–407 (ATSKLIHPDEDISLEERRAQLPKYQRNLPRPGQ) are GLEBS. Residues 463-483 (GQGPPMVPPYQGGPPRPPMGM) show a composition bias toward pro residues.

As to quaternary structure, interacts (via GLEBS region) with BUB3.

Its subcellular location is the nucleus. It localises to the chromosome. It is found in the centromere. The protein localises to the kinetochore. The protein resides in the cytoplasm. Its subcellular location is the cytoskeleton. It localises to the spindle. Its function is as follows. Kinetochore- and microtubule-binding protein that plays a key role in spindle assembly. ZNF207/BuGZ is mainly composed of disordered low-complexity regions and undergoes phase transition or coacervation to form temperature-dependent liquid droplets. Coacervation promotes microtubule bundling and concentrates tubulin, promoting microtubule polymerization and assembly of spindle and spindle matrix by concentrating its building blocks. Also acts as a regulator of mitotic chromosome alignment by mediating the stability and kinetochore loading of BUB3. Mechanisms by which BUB3 is protected are unclear: according to a first report, ZNF207/BuGZ may act by blocking ubiquitination and proteasomal degradation of BUB3. According to another report, the stabilization is independent of the proteasome. The sequence is that of BUB3-interacting and GLEBS motif-containing protein ZNF207 from Pongo abelii (Sumatran orangutan).